The chain runs to 460 residues: Probable Xaa-Pro aminopeptidase PEPP (460 aa).

4 residues coordinate Mn(2+): Asp-256, Asp-267, Glu-390, and Glu-430.

This sequence belongs to the peptidase M24B family. Mn(2+) serves as cofactor.

The enzyme catalyses Release of any N-terminal amino acid, including proline, that is linked to proline, even from a dipeptide or tripeptide.. Functionally, catalyzes the removal of a penultimate prolyl residue from the N-termini of peptides. The sequence is that of Probable Xaa-Pro aminopeptidase PEPP (PEPP) from Podospora anserina (strain S / ATCC MYA-4624 / DSM 980 / FGSC 10383) (Pleurage anserina).